Here is a 441-residue protein sequence, read N- to C-terminus: Damage-control phosphatase ARMT1 (441 aa).

The residue at position 2 (Ala2) is an N-acetylalanine. An N6-acetyllysine modification is found at Lys40. A Phosphoserine modification is found at Ser102. Mn(2+)-binding residues include Asp253 and Asn254. 253-254 (DN) is a substrate binding site. Residues Glu258 and Asp291 each coordinate S-adenosyl-L-methionine. Asp291 serves as a coordination point for Mn(2+). Residues 367 to 371 (DLNYR) and Lys404 contribute to the substrate site. A Subfamily III RTxK motif motif is present at residues 401–404 (RTLK).

It belongs to the damage-control phosphatase family. Sugar phosphate phosphatase III subfamily. The cofactor is Mn(2+). Ni(2+) is required as a cofactor. Post-translationally, automethylated.

The enzyme catalyses beta-D-fructose 1-phosphate + H2O = D-fructose + phosphate. It carries out the reaction beta-D-fructose 6-phosphate = dihydroxyacetone + D-glyceraldehyde 3-phosphate. The catalysed reaction is L-glutamyl-[protein] + S-adenosyl-L-methionine = [protein]-L-glutamate 5-O-methyl ester + S-adenosyl-L-homocysteine. Its function is as follows. Metal-dependent phosphatase that shows phosphatase activity against several substrates, including fructose-1-phosphate and fructose-6-phosphate. Its preference for fructose-1-phosphate, a strong glycating agent that causes DNA damage rather than a canonical yeast metabolite, suggests a damage-control function in hexose phosphate metabolism. Has also been shown to have O-methyltransferase activity that methylates glutamate residues of target proteins to form gamma-glutamyl methyl ester residues. Possibly methylates PCNA, suggesting it is involved in the DNA damage response. This is Damage-control phosphatase ARMT1 from Bos taurus (Bovine).